Reading from the N-terminus, the 153-residue chain is 17.3 kDa class I heat shock protein (153 aa).

Residues 39–153 (ENSAFVSTRV…PDVKAIDISG (115 aa)) enclose the sHSP domain.

It belongs to the small heat shock protein (HSP20) family. As to quaternary structure, forms oligomeric structures.

It is found in the cytoplasm. In Glycine max (Soybean), this protein is 17.3 kDa class I heat shock protein (HSP17.3-B).